The chain runs to 407 residues: SERPINE1 mRNA-binding protein 1 (407 aa).

Ser-25 carries the post-translational modification Phosphoserine. The interval Ala-33–Val-227 is disordered. Residues Ala-51 to Lys-68 show a composition bias toward low complexity. Lys-52 bears the N6-acetyllysine; alternate mark. A Glycyl lysine isopeptide (Lys-Gly) (interchain with G-Cter in SUMO1); alternate cross-link involves residue Lys-52. Position 68 is an N6-acetyllysine (Lys-68). Basic and acidic residues-rich tracts occupy residues Leu-70 to Asn-80, Ala-89 to Asp-114, and Lys-122 to Ile-162. Residue Lys-102 forms a Glycyl lysine isopeptide (Lys-Gly) (interchain with G-Cter in SUMO2) linkage. N6-acetyllysine is present on residues Lys-122 and Lys-140. Positions Gly-164–Gly-182 are enriched in gly residues. Residues Arg-165 and Arg-188 each carry the omega-N-methylarginine modification. A compositionally biased stretch (basic and acidic residues) spans Asp-183–Ser-199. Phosphoserine occurs at positions 197, 199, 203, 205, and 208. Lys-211 carries the post-translational modification N6-acetyllysine; alternate. Lys-211 is covalently cross-linked (Glycyl lysine isopeptide (Lys-Gly) (interchain with G-Cter in SUMO2); alternate). Residue Arg-216 is modified to Omega-N-methylarginine. Ser-221 is modified (phosphoserine). Thr-226 is modified (phosphothreonine). Lys-228 participates in a covalent cross-link: Glycyl lysine isopeptide (Lys-Gly) (interchain with G-Cter in SUMO1); alternate. Residue Lys-228 forms a Glycyl lysine isopeptide (Lys-Gly) (interchain with G-Cter in SUMO2); alternate linkage. 3 positions are modified to phosphoserine: Leu-231, Ser-234, and Tyr-237. Ser-234 bears the Phosphothreonine mark. Position 240 is a phosphothreonine (Lys-240). The span at Ile-242–Glu-256 shows a compositional bias: polar residues. 2 disordered regions span residues Ile-242–Thr-288 and Ser-327–Ala-407. The span at Gly-261 to Asn-274 shows a compositional bias: basic and acidic residues. A Glycyl lysine isopeptide (Lys-Gly) (interchain with G-Cter in SUMO2) cross-link involves residue Lys-280. The segment covering Ser-327–His-341 has biased composition (basic and acidic residues). The residue at position 328 (Lys-328) is an N6-acetyllysine. Ser-329 is subject to Phosphoserine. Residues Gly-362–Gly-371 show a composition bias toward gly residues. An omega-N-methylarginine mark is found at Arg-363, Arg-366, and Arg-369. A phosphoserine mark is found at Ser-391 and Ser-393.

Belongs to the SERBP1-HABP4 family. Associates with mature 80S ribosomes. Interacts with EEF2/eEF2; interaction sequesters EEF2/eEF2 at the A-site of the ribosome, thereby blocking the interaction sites of the mRNA-tRNA complex, promoting ribosome stabilization and hibernation. Interacts with SPIN1. Interacts with CHD3 and TDRD3. Interacts with ZDHHC17 (via ANK repeats). Phosphorylation by MTOR inhibits SERBP1 and relieves ribosome hibernation.

It is found in the cytoplasm. The protein resides in the nucleus. The protein localises to the perinuclear region. Ribosome-binding protein that promotes ribosome hibernation, a process during which ribosomes are stabilized in an inactive state and preserved from proteasomal degradation. Acts via its association with EEF2/eEF2 factor, sequestering EEF2/eEF2 at the A-site of the ribosome and promoting ribosome stabilization and storage in an inactive state. May also play a role in the regulation of mRNA stability: binds to the 3'-most 134 nt of the SERPINE1/PAI1 mRNA, a region which confers cyclic nucleotide regulation of message decay. Seems to play a role in PML-nuclear bodies formation. This is SERPINE1 mRNA-binding protein 1 from Mus musculus (Mouse).